A 369-amino-acid chain; its full sequence is 3-isopropylmalate dehydrogenase (369 aa).

77 to 90 contributes to the NAD(+) binding site; it reads GPKWDDLPFDKKPE. Positions 97, 107, 135, and 226 each coordinate substrate. Residues aspartate 226, aspartate 250, and aspartate 254 each contribute to the Mg(2+) site. An NAD(+)-binding site is contributed by 289-301; the sequence is GSAPDIAGKDMAN.

This sequence belongs to the isocitrate and isopropylmalate dehydrogenases family. LeuB type 1 subfamily. In terms of assembly, homodimer. It depends on Mg(2+) as a cofactor. Mn(2+) serves as cofactor.

It is found in the cytoplasm. The enzyme catalyses (2R,3S)-3-isopropylmalate + NAD(+) = 4-methyl-2-oxopentanoate + CO2 + NADH. The protein operates within amino-acid biosynthesis; L-leucine biosynthesis; L-leucine from 3-methyl-2-oxobutanoate: step 3/4. Functionally, catalyzes the oxidation of 3-carboxy-2-hydroxy-4-methylpentanoate (3-isopropylmalate) to 3-carboxy-4-methyl-2-oxopentanoate. The product decarboxylates to 4-methyl-2 oxopentanoate. The protein is 3-isopropylmalate dehydrogenase of Paramagnetospirillum magneticum (strain ATCC 700264 / AMB-1) (Magnetospirillum magneticum).